The following is a 309-amino-acid chain: Diadenylate cyclase (309 aa).

Positions 144-301 (TITLYELFET…DGKIVFETDP (158 aa)) constitute a DAC domain.

Belongs to the adenylate cyclase family. DacZ subfamily. It depends on Mn(2+) as a cofactor.

The catalysed reaction is 2 ATP = 3',3'-c-di-AMP + 2 diphosphate. Diadenylate cyclase that catalyzes the condensation of 2 ATP molecules into cyclic di-AMP (c-di-AMP). c-di-AMP is a second messenger for intracellular signal transduction involved in the control of important regulatory processes such as osmoregulation. The sequence is that of Diadenylate cyclase from Methanocaldococcus jannaschii (strain ATCC 43067 / DSM 2661 / JAL-1 / JCM 10045 / NBRC 100440) (Methanococcus jannaschii).